The following is a 173-amino-acid chain: Probable calcium-binding protein CML14 (173 aa).

4 consecutive EF-hand domains span residues 21 to 56 (SQLK…LGLR), 57 to 92 (PTGD…VLTT), 97 to 132 (VDQA…LGQP), and 133 to 168 (LTFE…SALD). 18 residues coordinate Ca(2+): Asp-34, Asn-36, Asp-38, Ser-40, Glu-45, Asp-70, Asn-72, Asn-74, Ser-76, Glu-81, Asp-110, Asp-112, Asn-114, Glu-121, Asp-146, Asp-148, Asp-150, and Glu-157.

In terms of biological role, potential calcium sensor. The chain is Probable calcium-binding protein CML14 (CML14) from Oryza sativa subsp. japonica (Rice).